We begin with the raw amino-acid sequence, 78 residues long: D-alanyl carrier protein (78 aa).

In terms of domain architecture, Carrier spans 1 to 78 (MEFKNQVYGI…HIAEQLAEMK (78 aa)). Residue S36 is modified to O-(pantetheine 4'-phosphoryl)serine.

This sequence belongs to the DltC family. In terms of processing, 4'-phosphopantetheine is transferred from CoA to a specific serine of apo-DCP.

The protein localises to the cytoplasm. The protein operates within cell wall biogenesis; lipoteichoic acid biosynthesis. Functionally, carrier protein involved in the D-alanylation of lipoteichoic acid (LTA). The loading of thioester-linked D-alanine onto DltC is catalyzed by D-alanine--D-alanyl carrier protein ligase DltA. The DltC-carried D-alanyl group is further transferred to cell membrane phosphatidylglycerol (PG) by forming an ester bond, probably catalyzed by DltD. D-alanylation of LTA plays an important role in modulating the properties of the cell wall in Gram-positive bacteria, influencing the net charge of the cell wall. This is D-alanyl carrier protein from Bacillus pumilus (strain SAFR-032).